The following is a 312-amino-acid chain: MLEKIYLANPRGFCAGVKYAISYVEQVQANSEEQIYVRKEIVHNRRVVEDMKKNGIRFINDLDEAPNGATVIFSAHGVSPSVVEAAKQRGMKIGDATCPLVTRVHRKARKIKDTHQIIYIGHEGHDEAIGTMGEAEMFLVESLEDIISLKDKIDPNKPLTYLMQTTLSVADTKNIIDQISKTFPFVEHPSKDDICYATTERQEAVSLMMDKIDAMLVIGADNSSNSLRLLQLAQKSKPHSFKVSTADDLSKEYIQNNEIKILGLTAGASTPQVLVDEIISKLKIFYPNANVELFPGSRDDSMNFKLPGVLLS.

Cys14 lines the [4Fe-4S] cluster pocket. (2E)-4-hydroxy-3-methylbut-2-enyl diphosphate contacts are provided by His43 and His76. Residues His43 and His76 each coordinate dimethylallyl diphosphate. Isopentenyl diphosphate-binding residues include His43 and His76. Cys98 contributes to the [4Fe-4S] cluster binding site. His125 contributes to the (2E)-4-hydroxy-3-methylbut-2-enyl diphosphate binding site. His125 is a dimethylallyl diphosphate binding site. His125 contributes to the isopentenyl diphosphate binding site. Glu127 functions as the Proton donor in the catalytic mechanism. Residue Thr165 participates in (2E)-4-hydroxy-3-methylbut-2-enyl diphosphate binding. Cys195 provides a ligand contact to [4Fe-4S] cluster. (2E)-4-hydroxy-3-methylbut-2-enyl diphosphate contacts are provided by Ser223, Ser224, Asn225, and Ser269. Dimethylallyl diphosphate contacts are provided by Ser223, Ser224, Asn225, and Ser269. 4 residues coordinate isopentenyl diphosphate: Ser223, Ser224, Asn225, and Ser269.

This sequence belongs to the IspH family. [4Fe-4S] cluster is required as a cofactor.

The catalysed reaction is isopentenyl diphosphate + 2 oxidized [2Fe-2S]-[ferredoxin] + H2O = (2E)-4-hydroxy-3-methylbut-2-enyl diphosphate + 2 reduced [2Fe-2S]-[ferredoxin] + 2 H(+). It catalyses the reaction dimethylallyl diphosphate + 2 oxidized [2Fe-2S]-[ferredoxin] + H2O = (2E)-4-hydroxy-3-methylbut-2-enyl diphosphate + 2 reduced [2Fe-2S]-[ferredoxin] + 2 H(+). It participates in isoprenoid biosynthesis; dimethylallyl diphosphate biosynthesis; dimethylallyl diphosphate from (2E)-4-hydroxy-3-methylbutenyl diphosphate: step 1/1. It functions in the pathway isoprenoid biosynthesis; isopentenyl diphosphate biosynthesis via DXP pathway; isopentenyl diphosphate from 1-deoxy-D-xylulose 5-phosphate: step 6/6. In terms of biological role, catalyzes the conversion of 1-hydroxy-2-methyl-2-(E)-butenyl 4-diphosphate (HMBPP) into a mixture of isopentenyl diphosphate (IPP) and dimethylallyl diphosphate (DMAPP). Acts in the terminal step of the DOXP/MEP pathway for isoprenoid precursor biosynthesis. This Leptospira interrogans serogroup Icterohaemorrhagiae serovar copenhageni (strain Fiocruz L1-130) protein is 4-hydroxy-3-methylbut-2-enyl diphosphate reductase.